The chain runs to 148 residues: Copper transport protein ctr6 (148 aa).

Over 1–33 (MNHGGNSTMRHCSMKMTFNTDYDNLCIVFKSWH) the chain is Extracellular. A helical membrane pass occupies residues 34–54 (IGNLSQFLLSLLAIAILGYLF). At 55–108 (ERLRSFTSLKETEFQRGYAGQQSEGLLTHHSKSLKSGRPFRLCALYAVQLVFSY) the chain is on the cytoplasmic side. A helical transmembrane segment spans residues 109 to 129 (FLMLVAMTYNAYVILAIAIGA). Topologically, residues 130–148 (AFGYRRSHCDTVQTVGLCH) are extracellular.

Belongs to the copper transporter (Ctr) (TC 1.A.56) family. SLC31A subfamily. Homotrimer.

It localises to the vacuole membrane. Its function is as follows. Mobilizes stored copper from the vacuole to the cytoplasm under conditions of copper limitation. The polypeptide is Copper transport protein ctr6 (ctr6) (Schizosaccharomyces pombe (strain 972 / ATCC 24843) (Fission yeast)).